The chain runs to 306 residues: Large ribosomal subunit protein mL45 (306 aa).

The disordered stretch occupies residues Leu-287–Ala-306.

Belongs to the mitochondrion-specific ribosomal protein mL45 family. Component of the mitochondrial large ribosomal subunit (mt-LSU). Mature mammalian 55S mitochondrial ribosomes consist of a small (28S) and a large (39S) subunit. The 28S small subunit contains a 12S ribosomal RNA (12S mt-rRNA) and 30 different proteins. The 39S large subunit contains a 16S rRNA (16S mt-rRNA), a copy of mitochondrial valine transfer RNA (mt-tRNA(Val)), which plays an integral structural role, and 52 different proteins.

The protein resides in the mitochondrion. Component of the mitochondrial large ribosomal subunit (mt-LSU). Within the mitochondrial ribosomes, required to direct the nascent polypeptide toward the tunnel exit and position the exit at a distance from the membrane surface. This Homo sapiens (Human) protein is Large ribosomal subunit protein mL45.